The primary structure comprises 955 residues: 2-oxoglutarate dehydrogenase E1 component (955 aa).

This sequence belongs to the alpha-ketoglutarate dehydrogenase family. Homodimer. Part of the 2-oxoglutarate dehydrogenase (OGDH) complex composed of E1 (2-oxoglutarate dehydrogenase), E2 (dihydrolipoamide succinyltransferase) and E3 (dihydrolipoamide dehydrogenase); the complex contains multiple copies of the three enzymatic components (E1, E2 and E3). Thiamine diphosphate is required as a cofactor.

The catalysed reaction is N(6)-[(R)-lipoyl]-L-lysyl-[protein] + 2-oxoglutarate + H(+) = N(6)-[(R)-S(8)-succinyldihydrolipoyl]-L-lysyl-[protein] + CO2. Functionally, E1 component of the 2-oxoglutarate dehydrogenase (OGDH) complex which catalyzes the decarboxylation of 2-oxoglutarate, the first step in the conversion of 2-oxoglutarate to succinyl-CoA and CO(2). The sequence is that of 2-oxoglutarate dehydrogenase E1 component from Bacillus cereus (strain ATCC 14579 / DSM 31 / CCUG 7414 / JCM 2152 / NBRC 15305 / NCIMB 9373 / NCTC 2599 / NRRL B-3711).